Consider the following 209-residue polypeptide: Ferritin heavy chain (209 aa).

An N-terminal signal peptide occupies residues 1–27; it reads MMKSVFFGVVAITVAILSIYQETAQAQ. The region spanning 40 to 193 is the Ferritin-like diiron domain; the sequence is DSVDDQCLAA…EKIATLKKMK (154 aa). Glu57, Glu92, His95, Glu140, and Gln175 together coordinate Fe cation.

This sequence belongs to the ferritin family. Oligomer of 24 subunits. There are two types of subunits: L (light) chain and H (heavy) chain. The functional molecule forms a roughly spherical shell with a diameter of 12 nm and contains a central cavity into which the insoluble mineral iron core is deposited.

It is found in the secreted. The protein localises to the cytoplasm. It catalyses the reaction 4 Fe(2+) + O2 + 4 H(+) = 4 Fe(3+) + 2 H2O. Its function is as follows. Stores iron in a soluble, non-toxic, readily available form. Important for iron homeostasis. Has ferroxidase activity. Iron is taken up in the ferrous form and deposited as ferric hydroxides after oxidation. The polypeptide is Ferritin heavy chain (FERH) (Aedes aegypti (Yellowfever mosquito)).